The sequence spans 216 residues: Uracil phosphoribosyltransferase (216 aa).

5-phospho-alpha-D-ribose 1-diphosphate-binding positions include arginine 85, arginine 110, and aspartate 135–serine 143. Residues isoleucine 200 and glycine 205–alanine 207 contribute to the uracil site. Aspartate 206 is a 5-phospho-alpha-D-ribose 1-diphosphate binding site.

It belongs to the UPRTase family. Mg(2+) serves as cofactor.

It catalyses the reaction UMP + diphosphate = 5-phospho-alpha-D-ribose 1-diphosphate + uracil. The protein operates within pyrimidine metabolism; UMP biosynthesis via salvage pathway; UMP from uracil: step 1/1. With respect to regulation, allosterically activated by GTP. Its function is as follows. Catalyzes the conversion of uracil and 5-phospho-alpha-D-ribose 1-diphosphate (PRPP) to UMP and diphosphate. This chain is Uracil phosphoribosyltransferase, found in Burkholderia multivorans (strain ATCC 17616 / 249).